A 149-amino-acid polypeptide reads, in one-letter code: Gamma-glutamylaminecyclotransferase (149 aa).

Residue 7-10 coordinates substrate; the sequence is YGTL. E82 (proton acceptor) is an active-site residue.

It belongs to the gamma-glutamylcyclotransferase family. In terms of assembly, monomer.

It catalyses the reaction epsilon-(gamma-L-glutamyl)-L-lysine = 5-oxo-L-proline + L-lysine. Its function is as follows. Contributes to degradation of proteins cross-linked by transglutaminases by degrading the cross-link between a lysine and a glutamic acid residue. Catalyzes the formation of 5-oxo-L-proline from L-gamma-glutamyl-L-epsilon-lysine. Inactive with L-gamma-glutamyl-alpha-amino acid substrates such as L-gamma-glutamyl-L-alpha-cysteine and L-gamma-glutamyl-L-alpha-alanine. In Rattus norvegicus (Rat), this protein is Gamma-glutamylaminecyclotransferase (Ggact).